Consider the following 184-residue polypeptide: Peptide methionine sulfoxide reductase (184 aa).

A Phosphoserine modification is found at Ser-58.

This sequence belongs to the MsrA Met sulfoxide reductase family.

The catalysed reaction is L-methionyl-[protein] + [thioredoxin]-disulfide + H2O = L-methionyl-(S)-S-oxide-[protein] + [thioredoxin]-dithiol. It catalyses the reaction [thioredoxin]-disulfide + L-methionine + H2O = L-methionine (S)-S-oxide + [thioredoxin]-dithiol. Has an important function as a repair enzyme for proteins that have been inactivated by oxidation. Catalyzes the reversible oxidation-reduction of methionine sulfoxide in proteins to methionine. Also able to reduce dimethyl sulfoxide (DMSO) as well, with DMS as the product. The chain is Peptide methionine sulfoxide reductase (MXR1) from Saccharomyces cerevisiae (strain ATCC 204508 / S288c) (Baker's yeast).